Reading from the N-terminus, the 268-residue chain is MADS-box protein FBP24 (268 aa).

Positions 4 to 64 (MGRGKIEVKR…GKLFEYCSQP (61 aa)) constitute an MADS-box domain. Positions 88 to 178 (RVQLYDEVAK…YQWLMNNQMY (91 aa)) constitute a K-box domain. The disordered stretch occupies residues 243 to 268 (NSISPYRLQPSHPNLQDSHVHGPSYD).

It is found in the nucleus. In terms of biological role, probable transcription factor. This chain is MADS-box protein FBP24 (FBP24), found in Petunia hybrida (Petunia).